The chain runs to 91 residues: Large ribosomal subunit protein eL31 (91 aa).

Belongs to the eukaryotic ribosomal protein eL31 family.

In Pyrobaculum neutrophilum (strain DSM 2338 / JCM 9278 / NBRC 100436 / V24Sta) (Thermoproteus neutrophilus), this protein is Large ribosomal subunit protein eL31.